Consider the following 322-residue polypeptide: Quinolinate synthase (322 aa).

Residues H38 and S55 each coordinate iminosuccinate. A [4Fe-4S] cluster-binding site is contributed by C100. Iminosuccinate contacts are provided by residues 126–128 (YIN) and S143. C186 lines the [4Fe-4S] cluster pocket. Iminosuccinate is bound by residues 212–214 (HPE) and T229. C279 lines the [4Fe-4S] cluster pocket.

It belongs to the quinolinate synthase family. Type 2 subfamily. [4Fe-4S] cluster is required as a cofactor.

Its subcellular location is the cytoplasm. It carries out the reaction iminosuccinate + dihydroxyacetone phosphate = quinolinate + phosphate + 2 H2O + H(+). The protein operates within cofactor biosynthesis; NAD(+) biosynthesis; quinolinate from iminoaspartate: step 1/1. Functionally, catalyzes the condensation of iminoaspartate with dihydroxyacetone phosphate to form quinolinate. The protein is Quinolinate synthase of Aquifex aeolicus (strain VF5).